Consider the following 220-residue polypeptide: Deoxyribose-phosphate aldolase 2 (220 aa).

The active-site Proton donor/acceptor is D89. Residue K151 is the Schiff-base intermediate with acetaldehyde of the active site. K180 functions as the Proton donor/acceptor in the catalytic mechanism.

The protein belongs to the DeoC/FbaB aldolase family. DeoC type 1 subfamily.

It localises to the cytoplasm. The enzyme catalyses 2-deoxy-D-ribose 5-phosphate = D-glyceraldehyde 3-phosphate + acetaldehyde. It participates in carbohydrate degradation; 2-deoxy-D-ribose 1-phosphate degradation; D-glyceraldehyde 3-phosphate and acetaldehyde from 2-deoxy-alpha-D-ribose 1-phosphate: step 2/2. Its function is as follows. Catalyzes a reversible aldol reaction between acetaldehyde and D-glyceraldehyde 3-phosphate to generate 2-deoxy-D-ribose 5-phosphate. In Staphylococcus aureus (strain MRSA252), this protein is Deoxyribose-phosphate aldolase 2.